We begin with the raw amino-acid sequence, 369 residues long: Peptide chain release factor subunit 1 (369 aa).

Belongs to the eukaryotic release factor 1 family. As to quaternary structure, heterodimer of two subunits, one of which binds GTP.

It is found in the cytoplasm. Directs the termination of nascent peptide synthesis (translation) in response to the termination codons UAA, UAG and UGA. In Saccharolobus solfataricus (strain ATCC 35092 / DSM 1617 / JCM 11322 / P2) (Sulfolobus solfataricus), this protein is Peptide chain release factor subunit 1 (prf1).